Consider the following 1358-residue polypeptide: DNA mismatch repair protein Msh6 (1358 aa).

A disordered region spans residues 1-87 (MSRQSTLYSF…SSAQAVPPSS (87 aa)). Phosphoserine is present on residues S14, S38, and S40. Residues 25–46 (AEASRQGAAASGASASRGGDAA) are compositionally biased toward low complexity. K67 is subject to N6-acetyllysine. Low complexity predominate over residues 76–87 (ASSSAQAVPPSS). 5 positions are modified to phosphoserine: S91, S137, S200, S219, and S227. Positions 92–154 (PGDLVWAKME…KRMLKPYTGS (63 aa)) constitute a PWWP domain. Residues 197–360 (DEPSEPEEEE…VSGGGNDSSG (164 aa)) are disordered. 2 stretches are compositionally biased toward acidic residues: residues 198 to 209 (EPSEPEEEEETE) and 219 to 231 (SEED…EEEA). The span at 240–249 (RSSRQVKKRR) shows a compositional bias: basic residues. Residues S252, S254, S256, and S261 each carry the phosphoserine modification. A compositionally biased stretch (basic and acidic residues) spans 263–273 (VEFKPDTKQEG). T269 carries the post-translational modification Phosphothreonine. 4 positions are modified to phosphoserine: S274, S275, S279, and S280. The span at 329-351 (LSETKSTLSAFSAPQNSESQTHV) shows a compositional bias: polar residues. Position 487 is a phosphothreonine (T487). At K503 the chain carries N6-acetyllysine. 2 positions are modified to phosphoserine: S827 and S932. At T1007 the chain carries Phosphothreonine. 1132–1139 (GPNMGGKS) contacts ATP.

Belongs to the DNA mismatch repair MutS family. Component of the DNA mismatch repair (MMR) complex composed at least of MSH2, MSH3, MSH6, PMS1 and MLH1. Heterodimer consisting of MSH2-MSH6 (MutS alpha). Forms a ternary complex with MutL alpha (MLH1-PMS1). Interacts with MCM9. Part of the BRCA1-associated genome surveillance complex (BASC), which contains BRCA1, MSH2, MSH6, MLH1, ATM, BLM, PMS2 and the RAD50-MRE11-NBS1 protein complex. This association could be a dynamic process changing throughout the cell cycle and within subnuclear domains. Post-translationally, phosphorylated by PRKCZ, which may prevent MutS alpha degradation by the ubiquitin-proteasome pathway.

The protein localises to the nucleus. Its subcellular location is the chromosome. In terms of biological role, component of the post-replicative DNA mismatch repair system (MMR). Heterodimerizes with MSH2 to form MutS alpha, which binds to DNA mismatches thereby initiating DNA repair. When bound, MutS alpha bends the DNA helix and shields approximately 20 base pairs, and recognizes single base mismatches and dinucleotide insertion-deletion loops (IDL) in the DNA. After mismatch binding, forms a ternary complex with the MutL alpha heterodimer, which is thought to be responsible for directing the downstream MMR events, including strand discrimination, excision, and resynthesis. ATP binding and hydrolysis play a pivotal role in mismatch repair functions. The ATPase activity associated with MutS alpha regulates binding similar to a molecular switch: mismatched DNA provokes ADP--&gt;ATP exchange, resulting in a discernible conformational transition that converts MutS alpha into a sliding clamp capable of hydrolysis-independent diffusion along the DNA backbone. This transition is crucial for mismatch repair. MutS alpha may also play a role in DNA homologous recombination repair. Recruited on chromatin in G1 and early S phase via its PWWP domain that specifically binds trimethylated 'Lys-36' of histone H3 (H3K36me3): early recruitment to chromatin to be replicated allowing a quick identification of mismatch repair to initiate the DNA mismatch repair reaction. This is DNA mismatch repair protein Msh6 from Mus musculus (Mouse).